The following is a 166-amino-acid chain: Protein C2-DOMAIN ABA-RELATED 11 (166 aa).

Residue Met-1 is modified to N-acetylmethionine. A C2 domain is found at 1–103 (MGEPLGLLQV…ISVARLRHVV (103 aa)). Residue Gly-2 is modified to N-acetylglycine; in Protein C2-DOMAIN ABA-RELATED 11, N-terminally processed. Residues Arg-21, Asp-22, Asp-27, Asp-73, Lys-74, Asp-75, and Asp-81 each coordinate Ca(2+).

This sequence belongs to the plant CAR protein family. As to quaternary structure, binds to PYR/PYL/RCAR abscisic acid intracellular receptors in an ABA-independent manner, both at the plasma membrane and in the nucleus.

It localises to the cell membrane. It is found in the nucleus. Its function is as follows. Stimulates the GTPase/ATPase activities of Obg-like ATPases. Mediates the transient calcium-dependent interaction of PYR/PYL/RCAR abscisic acid (ABA) receptors with the plasma membrane and thus regulates ABA sensitivity. The chain is Protein C2-DOMAIN ABA-RELATED 11 from Arabidopsis thaliana (Mouse-ear cress).